Reading from the N-terminus, the 398-residue chain is 1-deoxy-D-xylulose 5-phosphate reductoisomerase (398 aa).

The NADPH site is built by threonine 10, glycine 11, serine 12, isoleucine 13, asparagine 38, and asparagine 124. Residue lysine 125 participates in 1-deoxy-D-xylulose 5-phosphate binding. An NADPH-binding site is contributed by glutamate 126. Position 150 (aspartate 150) interacts with Mn(2+). 1-deoxy-D-xylulose 5-phosphate is bound by residues serine 151, glutamate 152, serine 176, and histidine 199. Glutamate 152 contributes to the Mn(2+) binding site. Glycine 205 contributes to the NADPH binding site. The 1-deoxy-D-xylulose 5-phosphate site is built by serine 212, asparagine 217, lysine 218, and glutamate 221. Glutamate 221 is a Mn(2+) binding site.

It belongs to the DXR family. Mg(2+) is required as a cofactor. It depends on Mn(2+) as a cofactor.

The enzyme catalyses 2-C-methyl-D-erythritol 4-phosphate + NADP(+) = 1-deoxy-D-xylulose 5-phosphate + NADPH + H(+). Its pathway is isoprenoid biosynthesis; isopentenyl diphosphate biosynthesis via DXP pathway; isopentenyl diphosphate from 1-deoxy-D-xylulose 5-phosphate: step 1/6. In terms of biological role, catalyzes the NADPH-dependent rearrangement and reduction of 1-deoxy-D-xylulose-5-phosphate (DXP) to 2-C-methyl-D-erythritol 4-phosphate (MEP). The sequence is that of 1-deoxy-D-xylulose 5-phosphate reductoisomerase from Crocosphaera subtropica (strain ATCC 51142 / BH68) (Cyanothece sp. (strain ATCC 51142)).